The chain runs to 206 residues: Protein FAM228A (206 aa).

It belongs to the FAM228 family.

The sequence is that of Protein FAM228A (FAM228A) from Homo sapiens (Human).